A 200-amino-acid polypeptide reads, in one-letter code: Small ribosomal subunit protein uS4 (200 aa).

The interval 1 to 43 (MARYTGPRGRRDRRAGVMLSSMRKNPLEKKPYPPGEHGRDRQR) is disordered. Positions 25 to 43 (NPLEKKPYPPGEHGRDRQR) are enriched in basic and acidic residues. Residues 92-158 (LRMDNVVYRM…QPIQEAVEQV (67 aa)) enclose the S4 RNA-binding domain.

The protein belongs to the universal ribosomal protein uS4 family. Part of the 30S ribosomal subunit. Contacts protein S5. The interaction surface between S4 and S5 is involved in control of translational fidelity.

Functionally, one of the primary rRNA binding proteins, it binds directly to 16S rRNA where it nucleates assembly of the body of the 30S subunit. Its function is as follows. With S5 and S12 plays an important role in translational accuracy. The sequence is that of Small ribosomal subunit protein uS4 from Rubrobacter xylanophilus (strain DSM 9941 / JCM 11954 / NBRC 16129 / PRD-1).